A 169-amino-acid polypeptide reads, in one-letter code: Interleukin-36 gamma (169 aa).

The propeptide occupies 1–17 (MRGTPGDADGGGRAVYQ).

The protein belongs to the IL-1 family. Interacts with cargo receptor TMED10; the interaction mediates the translocation from the cytoplasm into the ERGIC (endoplasmic reticulum-Golgi intermediate compartment) and thereby secretion. In terms of processing, N-terminal truncation leads to a dramatic enhancement of its activity (&gt;1000-fold). Proteolytically cleaved by cathepsin CTSG. As to expression, highly expressed in tissues containing epithelial cells: skin, lung, stomach and esophagus. Expressed in bronchial epithelial. In skin is expressed only in keratinocytes but not in fibroblasts, endothelial cells or melanocytes. Up-regulated in lesional psoriasis skin. Expressed in monocyte-derived dendritic cells and M1 macrophages.

The protein resides in the cytoplasm. Its subcellular location is the secreted. Its function is as follows. Cytokine that binds to and signals through the IL1RL2/IL-36R receptor which in turn activates NF-kappa-B and MAPK signaling pathways in target cells. Part of the IL-36 signaling system that is thought to be present in epithelial barriers and to take part in local inflammatory response; similar to the IL-1 system with which it shares the coreceptor IL1RAP. Seems to be involved in skin inflammatory response by acting on keratinocytes, dendritic cells and indirectly on T-cells to drive tissue infiltration, cell maturation and cell proliferation. In cultured keratinocytes induces the expression of macrophage, T-cell, and neutrophil chemokines, such as CCL3, CCL4, CCL5, CCL2, CCL17, CCL22, CL20, CCL5, CCL2, CCL17, CCL22, CXCL8, CCL20 and CXCL1; also stimulates its own expression and that of the prototypic cutaneous pro-inflammatory parameters TNF-alpha, S100A7/psoriasin and inducible NOS. May play a role in pro-inflammatory responses during particular neutrophilic airway inflammation: activates mitogen-activated protein kinases and NF-kappa B in primary lung fibroblasts, and stimulates the expression of IL-8 and CXCL3 and Th17 chemokine CCL20 in lung fibroblasts. May be involved in the innate immune response to fungal pathogens, such as Aspergillus fumigatus. This is Interleukin-36 gamma from Homo sapiens (Human).